We begin with the raw amino-acid sequence, 119 residues long: Ribosome-binding factor A (119 aa).

This sequence belongs to the RbfA family. As to quaternary structure, monomer. Binds 30S ribosomal subunits, but not 50S ribosomal subunits or 70S ribosomes.

It is found in the cytoplasm. Functionally, one of several proteins that assist in the late maturation steps of the functional core of the 30S ribosomal subunit. Associates with free 30S ribosomal subunits (but not with 30S subunits that are part of 70S ribosomes or polysomes). Required for efficient processing of 16S rRNA. May interact with the 5'-terminal helix region of 16S rRNA. This Buchnera aphidicola subsp. Acyrthosiphon pisum (strain Tuc7) protein is Ribosome-binding factor A.